The chain runs to 110 residues: Auxin-responsive protein SAUR71 (110 aa).

The protein belongs to the ARG7 family. In terms of tissue distribution, highly expressed in the steles of roots and hypocotyls.

Its subcellular location is the cytoplasm. Its function is as follows. Plays a role in the regulation of cell expansion, root meristem patterning and auxin transport. The polypeptide is Auxin-responsive protein SAUR71 (Arabidopsis thaliana (Mouse-ear cress)).